The following is a 375-amino-acid chain: Succinyl-diaminopimelate desuccinylase (375 aa).

H66 is a binding site for Zn(2+). D68 is a catalytic residue. D99 is a binding site for Zn(2+). Catalysis depends on E130, which acts as the Proton acceptor. The Zn(2+) site is built by E131, E159, and H345.

This sequence belongs to the peptidase M20A family. DapE subfamily. As to quaternary structure, homodimer. Zn(2+) is required as a cofactor. Co(2+) serves as cofactor.

The enzyme catalyses N-succinyl-(2S,6S)-2,6-diaminopimelate + H2O = (2S,6S)-2,6-diaminopimelate + succinate. It functions in the pathway amino-acid biosynthesis; L-lysine biosynthesis via DAP pathway; LL-2,6-diaminopimelate from (S)-tetrahydrodipicolinate (succinylase route): step 3/3. Its function is as follows. Catalyzes the hydrolysis of N-succinyl-L,L-diaminopimelic acid (SDAP), forming succinate and LL-2,6-diaminopimelate (DAP), an intermediate involved in the bacterial biosynthesis of lysine and meso-diaminopimelic acid, an essential component of bacterial cell walls. The protein is Succinyl-diaminopimelate desuccinylase of Xanthobacter autotrophicus (strain ATCC BAA-1158 / Py2).